The primary structure comprises 450 residues: Probable galactarate/D-glucarate transporter GudP (450 aa).

Over 1 to 20 (MSSLSQAASSVEKRTNARYW) the chain is Cytoplasmic. The helical transmembrane segment at 21-41 (IVVMLFIVTSFNYGDRATLSI) threads the bilayer. Residues 42-58 (AGSEMAKDIGLDPVGMG) are Periplasmic-facing. Residues 59–79 (YVFSAFSWAYVIGQIPGGWLL) form a helical membrane-spanning segment. Topologically, residues 80–85 (DRFGSK) are cytoplasmic. The helical transmembrane segment at 86–105 (RVYFWSIFIWSMFTLLQGFV) threads the bilayer. The Periplasmic portion of the chain corresponds to 106–109 (DIFS). Residues 110-132 (GFGIIVALFTLRFLVGLAEAPSF) traverse the membrane as a helical segment. Residues 133–153 (PGNSRIVAAWFPAQERGTAVS) are Cytoplasmic-facing. A helical transmembrane segment spans residues 154–174 (IFNSAQYFATVIFAPIMGWLT). Over 175–176 (HE) the chain is Periplasmic. A helical transmembrane segment spans residues 177 to 197 (VGWSHVFFFMGGLGIVISFIW). Residues 198-254 (LKVIHEPNQHPGVNKKELEYIAAGGALINMDQQNTKVKVPFSVKWGQIKQLLGSRMM) are Cytoplasmic-facing. Residues 255–275 (IGVYIGQYCINALTYFFITWF) traverse the membrane as a helical segment. Over 276-290 (PVYLVQARGMSILKA) the chain is Periplasmic. A helical membrane pass occupies residues 291–311 (GFVASVPAVCGFIGGVLGGII). Residues 312-329 (SDWLMRRTGSLNIARKTP) lie on the Cytoplasmic side of the membrane. A helical membrane pass occupies residues 330 to 350 (IVMGMLLSMVMVFCNYVNVEW). M351 is a topological domain (periplasmic). A helical membrane pass occupies residues 352 to 372 (IIGFMALAFFGKGIGALGWAV). Residues 373-387 (MADTAPKEISGLSGG) lie on the Cytoplasmic side of the membrane. A helical membrane pass occupies residues 388-408 (LFNMFGNISGIVTPIAIGYIV). Residues 409-415 (GTTGSFN) are Periplasmic-facing. Residues 416–436 (GALIYVGVHALIAVLSYLVLV) form a helical membrane-spanning segment. Over 437-450 (GDIKRIELKPVAGQ) the chain is Cytoplasmic.

It belongs to the major facilitator superfamily. Phthalate permease family.

The protein localises to the cell inner membrane. It carries out the reaction galactarate(in) + H(+)(in) = galactarate(out) + H(+)(out). The enzyme catalyses D-glucarate(in) + H(+)(in) = D-glucarate(out) + H(+)(out). It catalyses the reaction (R)-glycerate(in) + H(+)(in) = (R)-glycerate(out) + H(+)(out). Its function is as follows. Probably involved in the uptake of galactarate and/or D-glucarate. May also transport D-glycerate. The chain is Probable galactarate/D-glucarate transporter GudP from Escherichia coli (strain K12).